Here is a 1714-residue protein sequence, read N- to C-terminus: Protein ESSENTIAL FOR POTEXVIRUS ACCUMULATION 1 (1714 aa).

2 disordered regions span residues 1 to 296 (MANS…PPHL) and 358 to 511 (IVSS…SKGE). Serine 39 carries the phosphoserine modification. The segment covering 58–75 (DPNQYGNHSDVVRTTGNG) has biased composition (polar residues). Basic and acidic residues-rich tracts occupy residues 96-136 (ESGR…DRWD) and 143-203 (GEQR…REKG). 2 stretches are compositionally biased toward polar residues: residues 230–244 (HNQSTPNKQVTSFSH) and 268–278 (IFTSAPNQSHP). Composition is skewed to basic and acidic residues over residues 389-422 (GSREDMTFGAEESKDESGETRNYPDDKFRPEASH) and 430-441 (RGNEAPVRELKE). Residues 444–463 (MQGNAHVQSASPWRQSSGGE) are compositionally biased toward polar residues. Residues 464–483 (RSNRNSHDWNDPSADSRLKS) show a composition bias toward basic and acidic residues. Residues 546–597 (ELSLYYKDPQGLIQGPFSGSDIIGWFEAGYFGIDLLVRLASAPNDSPFSLLG) form the GYF domain. Disordered stretches follow at residues 728–753 (ESANLMPGSENVSENAQQPTRSPSSD), 1092–1205 (VKNN…KPAP), and 1437–1566 (QEKM…GKKE). Residues 737 to 753 (ENVSENAQQPTRSPSSD) show a composition bias toward polar residues. The segment covering 1142–1162 (SEIKGKTKKSADTLIDNDTHL) has biased composition (basic and acidic residues). The segment covering 1163 to 1180 (IKSSTATASNTSQMSSEV) has biased composition (polar residues). A compositionally biased stretch (low complexity) spans 1467–1488 (ASWSRSASSPSQAVSQSSSQSK). A compositionally biased stretch (polar residues) spans 1515–1544 (LTSQNSWGTKNTPGKVNAGTSLNRQKSVSM).

As to quaternary structure, associates with eIF4E initiation factors and the ribosome complex, thus likely contributing to the proper translation of target proteins. Interacts directly with RPL18B and eIF4E1. Binds to SMG7. Quickly phosphorylated at Ser-39 after treatment of seedlings with the pathogen-associated molecular pattern (PAMP) flg22. In terms of tissue distribution, expressed in all tissues, mostly in flowers, leaves and stems, and, to a lower extent, in roots (at protein level).

The protein localises to the cytoplasm. It is found in the cytosol. The protein resides in the P-body. Functionally, translational repressor involved in the negative regulation of immune receptor accumulation via the inhibition of nucleotide-binding leucine-rich repeat (NLR) receptor mediated defense. Represses NLR protein accumulation (e.g. SNC1, RPS4, RPM1 and RPS2). Together with SMG7, helps to restrict effector-triggered immunity (ETI) cell death induction during pathogen infection in a salicylic acid- (SA) and reactive oxygen species- (ROS) independent manner. Required for pathogen-associated molecular pattern (PAMP)-induced suppression of necrotrophic fungal (e.g. F.moniliforme) pathogen-derived mycotoxin-triggered (e.g. fumonisin B1) cell death. Its function is as follows. (Microbial infection) Required for early steps of plantago asiatica mosaic virus (PlAMV, genus Potexvirus) infection. Facilitates pathogenic growth of avirulent hemi-biotrophic bacteria P.syringae pv. tomato (Pst) DC3000 (e.g. AvrRps4 and AvrRpm1) and of the compatible oomycete H.arabidopsidis Noco2. This is Protein ESSENTIAL FOR POTEXVIRUS ACCUMULATION 1 from Arabidopsis thaliana (Mouse-ear cress).